We begin with the raw amino-acid sequence, 625 residues long: Threonine--tRNA ligase (625 aa).

An editing domain region spans residues 1–143 (MRILLIHSDY…ELSRTIIPEG (143 aa)). The segment at 206–505 (PHVKLMLEHE…MQEGKKPMLP (300 aa)) is catalytic. Zn(2+) contacts are provided by cysteine 298, histidine 350, and histidine 474.

It belongs to the class-II aminoacyl-tRNA synthetase family. As to quaternary structure, homodimer. Requires Zn(2+) as cofactor.

It localises to the cytoplasm. It catalyses the reaction tRNA(Thr) + L-threonine + ATP = L-threonyl-tRNA(Thr) + AMP + diphosphate + H(+). Its function is as follows. Catalyzes the attachment of threonine to tRNA(Thr) in a two-step reaction: L-threonine is first activated by ATP to form Thr-AMP and then transferred to the acceptor end of tRNA(Thr). Also edits incorrectly charged L-seryl-tRNA(Thr). In Pyrococcus horikoshii (strain ATCC 700860 / DSM 12428 / JCM 9974 / NBRC 100139 / OT-3), this protein is Threonine--tRNA ligase.